We begin with the raw amino-acid sequence, 141 residues long: Large ribosomal subunit protein uL11 (141 aa).

It belongs to the universal ribosomal protein uL11 family. As to quaternary structure, part of the ribosomal stalk of the 50S ribosomal subunit. Interacts with L10 and the large rRNA to form the base of the stalk. L10 forms an elongated spine to which L12 dimers bind in a sequential fashion forming a multimeric L10(L12)X complex. Post-translationally, one or more lysine residues are methylated.

Functionally, forms part of the ribosomal stalk which helps the ribosome interact with GTP-bound translation factors. In Synechococcus sp. (strain ATCC 27144 / PCC 6301 / SAUG 1402/1) (Anacystis nidulans), this protein is Large ribosomal subunit protein uL11.